A 457-amino-acid polypeptide reads, in one-letter code: DDB1- and CUL4-associated factor 10 (457 aa).

4 WD repeats span residues 65 to 104 (RTHG…HIKT), 108 to 146 (AHED…SKVC), 150 to 189 (GHTS…EDGC), and 195 to 234 (FHTR…KSLE). The segment covering 246-265 (TASTSDMTSTSSDTRPSSSP) has biased composition (low complexity). Residues 246–304 (TASTSDMTSTSSDTRPSSSPCHNSDLGPLFEKHMSRSSQREGASPRNSLEVLTPEVPGE) are disordered. Residues 281–292 (RSSQREGASPRN) are compositionally biased toward polar residues. WD repeat units lie at residues 306–346 (DRGN…QEGA), 368–406 (VGRG…KELV), and 424–457 (SHKD…QPKF).

It belongs to the WD repeat DCAF10 family.

Its pathway is protein modification; protein ubiquitination. Functionally, may function as a substrate receptor for CUL4-DDB1 E3 ubiquitin-protein ligase complex. The polypeptide is DDB1- and CUL4-associated factor 10 (dcaf10) (Xenopus tropicalis (Western clawed frog)).